Here is a 217-residue protein sequence, read N- to C-terminus: Ras-related protein RABA1g (217 aa).

20 to 27 contributes to the GTP binding site; it reads GDSGVGKS. An Effector region motif is present at residues 42-50; it reads SKSTIGVEF. Residues 68 to 72, 126 to 129, and 156 to 157 each bind GTP; these read DTAGQ, NKAD, and SA. 2 S-geranylgeranyl cysteine lipidation sites follow: Cys-214 and Cys-215.

This sequence belongs to the small GTPase superfamily. Rab family.

It localises to the cell membrane. In terms of biological role, intracellular vesicle trafficking and protein transport. The polypeptide is Ras-related protein RABA1g (RABA1G) (Arabidopsis thaliana (Mouse-ear cress)).